A 504-amino-acid polypeptide reads, in one-letter code: MEPVGVSHNTPEMDPPRNIQTPELPESGSVKDKIGKFSAYQQQPSGLKDAFGKTPTSIGANRSRTPQQIAAQLAAGRSTPGEITATHTGVSRTQGSRPTTSKRSDDNEGPPLLAPKPVWATSANTASVNKLLRSEADLPIRDKSIQRRPVAQISPIEAARLAAKKPRPPPVPRKPAAVATGPTSVPINVHSKGPESPEPTSKNHSSRHLEDTTIPFKAPPALPPRTGASSVPRKDLTNHRRLLDTNHGSRRRPSTPGTASLYTTSLSNSTTSLLDSSSGLDEGALSDAVVASSRASVRASQERKVPPPPPPERRARSRSLKQFPHTAKGEHTDSSSPSTHLRQTLREPTKIAENDEGYQRHKHLIRKHPHKHHEGDRRRWRSEITEKERKRYEGVWAANKGLLLPPAHLRVPEAYPPESSEMVVNLVAADIWSRSRLPRHVLAQVWDLVDGQHIGLLTREEFVVGMWLIDQQLKGHKLPPRVPASVWGSAKRISGVHIHGLPPA.

Disordered regions lie at residues 1-123 (MEPV…ATSA), 135-264 (EADL…LYTT), and 292-382 (SSRA…RWRS). 2 stretches are compositionally biased toward polar residues: residues 54–70 (TPTSIGANRSRTPQQIA) and 85–101 (ATHTGVSRTQGSRPTTS). Composition is skewed to basic and acidic residues over residues 135–145 (EADLPIRDKSI), 232–244 (PRKDLTNHRRLLD), and 344–359 (TLREPTKIAENDEGYQ). Residues 360 to 372 (RHKHLIRKHPHKH) show a composition bias toward basic residues. The segment covering 373–382 (HEGDRRRWRS) has biased composition (basic and acidic residues). The EH domain maps to 388–493 (ERKRYEGVWA…ASVWGSAKRI (106 aa)).

The protein belongs to the IRS4 family.

Functionally, positive regulator of phosphatidylinositol 4,5-bisphosphate turnover and negatively regulates signaling through the cell integrity pathway. Involved in rDNA silencing. This is Increased rDNA silencing protein 4 (irs4) from Aspergillus niger (strain ATCC MYA-4892 / CBS 513.88 / FGSC A1513).